The sequence spans 353 residues: Protein RecA (353 aa).

Residue 65–72 (GPESSGKT) participates in ATP binding.

This sequence belongs to the RecA family.

Its subcellular location is the cytoplasm. Functionally, can catalyze the hydrolysis of ATP in the presence of single-stranded DNA, the ATP-dependent uptake of single-stranded DNA by duplex DNA, and the ATP-dependent hybridization of homologous single-stranded DNAs. It interacts with LexA causing its activation and leading to its autocatalytic cleavage. The polypeptide is Protein RecA (Aeromonas salmonicida (strain A449)).